A 114-amino-acid polypeptide reads, in one-letter code: Large ribosomal subunit protein P2 (114 aa).

A compositionally biased stretch (gly residues) spans 74-83; the sequence is AAAAGGGGGD. Positions 74-114 are disordered; that stretch reads AAAAGGGGGDAPAAAAEEPKKEEKSEEESDEELGFSLFDDN. Over residues 98–114 the composition is skewed to acidic residues; the sequence is SEEESDEELGFSLFDDN.

The protein belongs to the eukaryotic ribosomal protein P1/P2 family. In terms of assembly, P1 and P2 exist as dimers at the large ribosomal subunit. In terms of processing, phosphorylated.

Plays an important role in the elongation step of protein synthesis. This Parthenium argentatum (Guayule rubber plant) protein is Large ribosomal subunit protein P2.